Here is a 425-residue protein sequence, read N- to C-terminus: AP-3 complex subunit mu (425 aa).

The region spanning 175–423 is the MHD domain; it reads TNEFFIHVLE…TIIAQNVSFR (249 aa).

Belongs to the adaptor complexes medium subunit family.

It is found in the cytoplasm. The protein localises to the cytoskeleton. It localises to the microtubule organizing center. Its subcellular location is the spindle pole body. The protein resides in the membrane. It is found in the golgi apparatus. The protein localises to the cytoplasmic vesicle membrane. Part of the AP-3 complex, an adaptor-related complex which is not clathrin-associated. The complex is associated with the Golgi region as well as more peripheral structures. It facilitates the budding of vesicles from the Golgi membrane and may be directly involved in trafficking to the vacuole. In Schizosaccharomyces pombe (strain 972 / ATCC 24843) (Fission yeast), this protein is AP-3 complex subunit mu (apm3).